Here is a 405-residue protein sequence, read N- to C-terminus: Argininosuccinate synthase (405 aa).

Residues A10–S18 and A37 contribute to the ATP site. Residues Y88 and S93 each coordinate L-citrulline. G118 lines the ATP pocket. Residues T120, N124, and D125 each contribute to the L-aspartate site. Residue N124 coordinates L-citrulline. The L-citrulline site is built by R128, S179, S188, E264, and Y276.

Belongs to the argininosuccinate synthase family. Type 1 subfamily. In terms of assembly, homotetramer.

Its subcellular location is the cytoplasm. The catalysed reaction is L-citrulline + L-aspartate + ATP = 2-(N(omega)-L-arginino)succinate + AMP + diphosphate + H(+). It functions in the pathway amino-acid biosynthesis; L-arginine biosynthesis; L-arginine from L-ornithine and carbamoyl phosphate: step 2/3. This is Argininosuccinate synthase from Pseudomonas entomophila (strain L48).